We begin with the raw amino-acid sequence, 195 residues long: Probable septum site-determining protein MinC (195 aa).

This sequence belongs to the MinC family. As to quaternary structure, interacts with MinD and FtsZ.

Its function is as follows. Cell division inhibitor that blocks the formation of polar Z ring septums. Rapidly oscillates between the poles of the cell to destabilize FtsZ filaments that have formed before they mature into polar Z rings. Prevents FtsZ polymerization. This is Probable septum site-determining protein MinC from Helicobacter pylori (strain G27).